Reading from the N-terminus, the 284-residue chain is MSRFCCFGAGCSEFSGHASTSSGKGKGIQGQVKVSYGFYLVRGMTNHPMEDYHVAELAEEKGNELGLFAIFDGHLGDTVPAYLQKNLFANILNEEEFLTQPDRAIIKAYEKTDQAILSHTPDLGQGGSTAVTAILLNGRKLWVANVGDSRAVLLKGGRPIQMSTDHDPNVERSAIENRGGFVSNMPGDVPRVCGQLAVSRAFGDRNLKSLLKSEPDIKVEDIDYTAELLVLASDGLWKVMNNQEVVDVAKRFKDPQAAAKQLTAEALKRDSKDDISCVVVRFRM.

The PPM-type phosphatase domain occupies 35-282 (SYGFYLVRGM…DDISCVVVRF (248 aa)). D72, G73, D234, and D273 together coordinate Mn(2+).

This sequence belongs to the PP2C family. Requires Mg(2+) as cofactor. The cofactor is Mn(2+).

It carries out the reaction O-phospho-L-seryl-[protein] + H2O = L-seryl-[protein] + phosphate. The catalysed reaction is O-phospho-L-threonyl-[protein] + H2O = L-threonyl-[protein] + phosphate. The chain is Probable protein phosphatase 2C 41 from Oryza sativa subsp. japonica (Rice).